A 469-amino-acid chain; its full sequence is Argininosuccinate lyase (469 aa).

Belongs to the lyase 1 family. Argininosuccinate lyase subfamily.

It is found in the cytoplasm. The enzyme catalyses 2-(N(omega)-L-arginino)succinate = fumarate + L-arginine. It participates in amino-acid biosynthesis; L-arginine biosynthesis; L-arginine from L-ornithine and carbamoyl phosphate: step 3/3. This chain is Argininosuccinate lyase, found in Burkholderia vietnamiensis (strain G4 / LMG 22486) (Burkholderia cepacia (strain R1808)).